Reading from the N-terminus, the 501-residue chain is Prostacyclin synthase (501 aa).

Residues 1–21 (MSWAALLGLLAVLLLLLLLLS) traverse the membrane as a helical segment. Residues R107, L113, N288, 359–360 (TR), and R383 contribute to the substrate site. C442 is a binding site for heme.

This sequence belongs to the cytochrome P450 family. Heme serves as cofactor.

Its subcellular location is the endoplasmic reticulum membrane. It carries out the reaction prostaglandin H2 = prostaglandin I2. The enzyme catalyses a hydroperoxyeicosatetraenoate = an oxoeicosatetraenoate + H2O. It catalyses the reaction (15S)-hydroperoxy-(5Z,8Z,11Z,13E)-eicosatetraenoate = 15-oxo-(5Z,8Z,11Z,13E)-eicosatetraenoate + H2O. The catalysed reaction is (15S)-hydroperoxy-(5Z,8Z,11Z,13E)-eicosatetraenoate + AH2 = (15S)-hydroxy-(5Z,8Z,11Z,13E)-eicosatetraenoate + A + H2O. Functionally, catalyzes the biosynthesis and metabolism of eicosanoids. Catalyzes the isomerization of prostaglandin H2 to prostacyclin (= prostaglandin I2), a potent mediator of vasodilation and inhibitor of platelet aggregation. Additionally, displays dehydratase activity, toward hydroperoxyeicosatetraenoates (HPETEs), especially toward (15S)-hydroperoxy-(5Z,8Z,11Z,13E)-eicosatetraenoate (15(S)-HPETE). This Rattus norvegicus (Rat) protein is Prostacyclin synthase (Ptgis).